Here is a 439-residue protein sequence, read N- to C-terminus: Cell division protein DivIB (439 aa).

2 disordered regions span residues 1–96 (MDDK…DSNI) and 119–149 (DNEQPQSAPKEQNSDSIDEETVTKKERKSKV). Residues 1–173 (MDDKTKNDQQ…RRKRQKRIQY (173 aa)) lie on the Cytoplasmic side of the membrane. Residues 11-20 (ESNEDKDELE) are compositionally biased toward acidic residues. Residues 26–38 (TSKKRRQRKRSKA) are compositionally biased toward basic residues. Positions 64–76 (KDFKKEESNDKNN) are enriched in basic and acidic residues. A compositionally biased stretch (low complexity) spans 77–86 (DSASSHANDN). Acidic residues predominate over residues 87 to 96 (NIDDSTDSNI). Residues 119-133 (DNEQPQSAPKEQNSD) show a composition bias toward polar residues. A helical membrane pass occupies residues 174-194 (SVITILVLLIAVILIYMFSPL). Positions 195–263 (SKIAHVNING…NTLNVDITEN (69 aa)) constitute a POTRA domain. Residues 195–439 (SKIAHVNING…KINKQSSKNN (245 aa)) lie on the Extracellular side of the membrane. Residues 396–439 (YRGNTSSQSESDKNVTKSSQEENQAKEELQSVLNKINKQSSKNN) form a disordered region. Residues 405-424 (ESDKNVTKSSQEENQAKEEL) are compositionally biased toward basic and acidic residues. The span at 426-439 (SVLNKINKQSSKNN) shows a compositional bias: polar residues.

This sequence belongs to the FtsQ/DivIB family. DivIB subfamily.

The protein localises to the cell membrane. Its function is as follows. Cell division protein that may be involved in stabilizing or promoting the assembly of the division complex. This is Cell division protein DivIB from Staphylococcus aureus (strain NCTC 8325 / PS 47).